The chain runs to 453 residues: MDVNVTSSTVRGTTRAPPSKSYTHRALLAAGYSDGATVRSPLVSADTKATARAVTAFGGAVEPESGERFDDADALVVDGFDGRPAVPDDVIDCANSGTTMRLVTAAAALADGTTVLTGDESLRSRPQGPLLEALGDLGVRAESTRGNGQAPLVVSGPLAGGEVAIPGNVSSQYVTALLMAGAVTEEGVEIDLTTPLKSAPYVDITLELLDDFGIEATPVGDGGDALDGAAGAAGFVVDGGQSYAPAGGSYTVPGDFSSISYLVAAGAVAAEPGEPVRIEGAVPSAQGDSAIVEIVERMGADIEWDREAGVITVRRSELSGVEVDVGDTPDLLPTIAALGAVADGDTRIMNCEHVRYKETDRVSAMAEELEKLGAKTTEEPDTLTVHGSESDLRGASVDGRADHRIVMALAVAALVAEGTTTIRGGEHVDVSFPNFFDAMADLGIAVERDGAGE.

Polar residues predominate over residues 1–12; the sequence is MDVNVTSSTVRG. The tract at residues 1 to 21 is disordered; the sequence is MDVNVTSSTVRGTTRAPPSKS. K20, S21, and R25 together coordinate 3-phosphoshikimate. K20 lines the phosphoenolpyruvate pocket. Positions 97 and 125 each coordinate phosphoenolpyruvate. S170, S171, Q172, S198, D330, and K357 together coordinate 3-phosphoshikimate. Q172 provides a ligand contact to phosphoenolpyruvate. D330 serves as the catalytic Proton acceptor. Phosphoenolpyruvate contacts are provided by R361 and R404.

The protein belongs to the EPSP synthase family. Monomer.

The protein resides in the cytoplasm. The enzyme catalyses 3-phosphoshikimate + phosphoenolpyruvate = 5-O-(1-carboxyvinyl)-3-phosphoshikimate + phosphate. It participates in metabolic intermediate biosynthesis; chorismate biosynthesis. In terms of biological role, catalyzes the transfer of the enolpyruvyl moiety of phosphoenolpyruvate (PEP) to the 5-hydroxyl of shikimate-3-phosphate (S3P) to produce enolpyruvyl shikimate-3-phosphate and inorganic phosphate. This chain is 3-phosphoshikimate 1-carboxyvinyltransferase, found in Halorubrum lacusprofundi (strain ATCC 49239 / DSM 5036 / JCM 8891 / ACAM 34).